We begin with the raw amino-acid sequence, 340 residues long: ATP-dependent 6-phosphofructokinase (340 aa).

Gly11 is a binding site for ATP. Position 21 to 25 (21 to 25 (RAVVR)) interacts with ADP. Residues 72 to 73 (RY) and 102 to 105 (GDGS) contribute to the ATP site. Asp103 serves as a coordination point for Mg(2+). A substrate-binding site is contributed by 125 to 127 (TID). The Proton acceptor role is filled by Asp127. Residue Arg154 coordinates ADP. Residues Arg162 and 169-171 (MGR) contribute to the substrate site. Residues 185–187 (GAD), Lys211, and 213–215 (KNH) each bind ADP. Substrate-binding positions include Glu222, Arg244, and 250–253 (HIQR).

It belongs to the phosphofructokinase type A (PFKA) family. ATP-dependent PFK group I subfamily. Prokaryotic clade 'B1' sub-subfamily. In terms of assembly, homotetramer. Requires Mg(2+) as cofactor.

The protein localises to the cytoplasm. The enzyme catalyses beta-D-fructose 6-phosphate + ATP = beta-D-fructose 1,6-bisphosphate + ADP + H(+). Its pathway is carbohydrate degradation; glycolysis; D-glyceraldehyde 3-phosphate and glycerone phosphate from D-glucose: step 3/4. Allosterically activated by ADP and other diphosphonucleosides, and allosterically inhibited by phosphoenolpyruvate. Its function is as follows. Catalyzes the phosphorylation of D-fructose 6-phosphate to fructose 1,6-bisphosphate by ATP, the first committing step of glycolysis. This is ATP-dependent 6-phosphofructokinase from Lactococcus lactis subsp. lactis (Streptococcus lactis).